The chain runs to 508 residues: Photosystem II CP47 reaction center protein (508 aa).

The next 6 helical transmembrane spans lie at 21-36 (AVHI…WAGS), 101-115 (IILS…IWHW), 140-156 (GIHL…FGAF), 203-218 (IAAG…FHLS), 237-252 (VLSS…AFVV), and 457-472 (NFAL…HGGR).

This sequence belongs to the PsbB/PsbC family. PsbB subfamily. PSII is composed of 1 copy each of membrane proteins PsbA, PsbB, PsbC, PsbD, PsbE, PsbF, PsbH, PsbI, PsbJ, PsbK, PsbL, PsbM, PsbT, PsbX, PsbY, PsbZ, Psb30/Ycf12, at least 3 peripheral proteins of the oxygen-evolving complex and a large number of cofactors. It forms dimeric complexes. The cofactor is Binds multiple chlorophylls. PSII binds additional chlorophylls, carotenoids and specific lipids..

It is found in the plastid. Its subcellular location is the chloroplast thylakoid membrane. In terms of biological role, one of the components of the core complex of photosystem II (PSII). It binds chlorophyll and helps catalyze the primary light-induced photochemical processes of PSII. PSII is a light-driven water:plastoquinone oxidoreductase, using light energy to abstract electrons from H(2)O, generating O(2) and a proton gradient subsequently used for ATP formation. The chain is Photosystem II CP47 reaction center protein from Chaetosphaeridium globosum (Charophycean green alga).